A 594-amino-acid polypeptide reads, in one-letter code: UvrABC system protein C (594 aa).

The GIY-YIG domain maps to 14 to 91 (DSPGCYLHKD…IQENMPKYNI (78 aa)). One can recognise a UVR domain in the interval 196–231 (DKIIDDLRSKMLEASHNQEFERAAEYRDLISGIATM).

The protein belongs to the UvrC family. In terms of assembly, interacts with UvrB in an incision complex.

It localises to the cytoplasm. Functionally, the UvrABC repair system catalyzes the recognition and processing of DNA lesions. UvrC both incises the 5' and 3' sides of the lesion. The N-terminal half is responsible for the 3' incision and the C-terminal half is responsible for the 5' incision. In Streptococcus equi subsp. zooepidemicus (strain H70), this protein is UvrABC system protein C.